The sequence spans 194 residues: Pyridoxine/pyridoxamine 5'-phosphate oxidase (194 aa).

FMN contacts are provided by residues 42–47 (RVVLLK), 57–58 (FT), R63, K64, and Q86. Position 47 (K47) interacts with substrate. Substrate contacts are provided by Y104, R108, and S112. Residues 121–122 (QS) and W166 each bind FMN. 172–174 (RIH) contacts substrate. R176 lines the FMN pocket.

This sequence belongs to the pyridoxamine 5'-phosphate oxidase family. In terms of assembly, homodimer. The cofactor is FMN.

The catalysed reaction is pyridoxamine 5'-phosphate + O2 + H2O = pyridoxal 5'-phosphate + H2O2 + NH4(+). The enzyme catalyses pyridoxine 5'-phosphate + O2 = pyridoxal 5'-phosphate + H2O2. It functions in the pathway cofactor metabolism; pyridoxal 5'-phosphate salvage; pyridoxal 5'-phosphate from pyridoxamine 5'-phosphate: step 1/1. The protein operates within cofactor metabolism; pyridoxal 5'-phosphate salvage; pyridoxal 5'-phosphate from pyridoxine 5'-phosphate: step 1/1. In terms of biological role, catalyzes the oxidation of either pyridoxine 5'-phosphate (PNP) or pyridoxamine 5'-phosphate (PMP) into pyridoxal 5'-phosphate (PLP). The sequence is that of Pyridoxine/pyridoxamine 5'-phosphate oxidase from Ehrlichia ruminantium (strain Welgevonden).